The primary structure comprises 205 residues: Putative 3-methyladenine DNA glycosylase (205 aa).

The protein belongs to the DNA glycosylase MPG family.

In Bacillus cereus (strain ATCC 10987 / NRS 248), this protein is Putative 3-methyladenine DNA glycosylase.